Here is a 420-residue protein sequence, read N- to C-terminus: Methyltransferase/ribosomally synthesized cyclic peptide gymnopeptides precursor gymMA1 (420 aa).

The segment at 1–251 (MQSSTQKQAG…GISTFYIPPK (251 aa)) is methyltransferase domain. Active-site residues include Arg-72, Tyr-76, and Tyr-98. Residues Tyr-98, His-100, Val-103, Ala-130, Gln-172, Ala-213, Ser-244, and Thr-245 each contribute to the S-adenosyl-L-methionine site. The segment at 252–378 (ELKDPSMDIM…WALRCAMKKM (127 aa)) is clasp domain. Positions 379-392 (PSSFMDEVDANNLP) are precursor leader. Val-394 and Val-396 each carry N-methylvaline. At Gly-398 the chain carries N-methylglycine. Residue Val-399 is modified to N-methylvaline. Ala-400 bears the N-methylalanine mark. At Gly-402 the chain carries N-methylglycine. 4 positions are modified to N-methylvaline: Val-404, Val-406, Val-408, and Val-410.

In the N-terminal section; belongs to the precorrin methyltransferase family. Homodimer. Post-translationally, gymMA1 automethylates at Val-394, Val-396, Gly-398, Val-399, Ala-400, Gly-402, Val-404, Val-406, Val-408 and Val-410 before being processed by a prolyloligopeptidase which likely forms a peptidyl ester upon removal of the follower propeptide, which then undergoes macrocyclization with the N-terminus of the modified core peptide. Peptide backbone alpha-N-methylations change the physicochemical properties of amide bonds to provide structural constraints and other favorable characteristics including biological membrane permeability to peptides.

The protein operates within mycotoxin biosynthesis. Fusion protein of the methyltransferase gymM1 and the gymnopeptides precursor; part of the gene cluster that mediates the biosynthesis of gymnopeptides, highly methylated cyclic octadecapeptides with striking antiproliferative activity on several human cancer cell lines. Gymnopeptides derive from the C-terminus of the gymMA1 protein, and it is the gymMA1 protein that methylates its own C-terminus using S-adenosyl methionine (SAM). The C-terminus is subsequently cleaved off and macrocyclized by a prolyloligopeptidase to give the final product. This chain is Methyltransferase/ribosomally synthesized cyclic peptide gymnopeptides precursor gymMA1, found in Gymnopus fusipes (Spindle toughshank).